A 209-amino-acid chain; its full sequence is Small ribosomal subunit protein uS4 (209 aa).

The interval 22–45 (RGRNPLLRKPNPPGQHGMQRKKKS) is disordered. The S4 RNA-binding domain maps to 93–154 (CRLDNIVYRL…KSKRLAIVTE (62 aa)).

It belongs to the universal ribosomal protein uS4 family. Part of the 30S ribosomal subunit. Contacts protein S5. The interaction surface between S4 and S5 is involved in control of translational fidelity.

In terms of biological role, one of the primary rRNA binding proteins, it binds directly to 16S rRNA where it nucleates assembly of the body of the 30S subunit. With S5 and S12 plays an important role in translational accuracy. This is Small ribosomal subunit protein uS4 from Chlamydia trachomatis serovar A (strain ATCC VR-571B / DSM 19440 / HAR-13).